Here is a 545-residue protein sequence, read N- to C-terminus: Membrane protein insertase YidC (545 aa).

Residues 8-28 form a helical membrane-spanning segment; that stretch reads ILLATVLSVGILILWQVIFPK. The segment at 31–69 is disordered; it reads PPKPAPTPAAEVAKPAAPAAPAPGAAAPAVPAPPPDAPE. Residues 38 to 59 show a composition bias toward low complexity; the sequence is PAAEVAKPAAPAAPAPGAAAPA. Transmembrane regions (helical) follow at residues 325 to 345, 355 to 375, 421 to 441, 458 to 478, and 497 to 517; these read IDYG…LYVM, WGVA…PLTY, LGGC…YAAL, LTAH…SFVM, and FFPG…TLYI.

Belongs to the OXA1/ALB3/YidC family. Type 1 subfamily. As to quaternary structure, interacts with the Sec translocase complex via SecD. Specifically interacts with transmembrane segments of nascent integral membrane proteins during membrane integration.

It is found in the cell inner membrane. Required for the insertion and/or proper folding and/or complex formation of integral membrane proteins into the membrane. Involved in integration of membrane proteins that insert both dependently and independently of the Sec translocase complex, as well as at least some lipoproteins. Aids folding of multispanning membrane proteins. The sequence is that of Membrane protein insertase YidC from Anaeromyxobacter dehalogenans (strain 2CP-C).